Reading from the N-terminus, the 499-residue chain is Putative antiporter subunit mnhD2 (499 aa).

Helical transmembrane passes span 3–23, 33–53, 79–99, 109–129, 131–151, 162–182, 210–230, 241–261, 272–292, 309–329, 331–351, 370–390, 404–424, and 452–472; these read LSNLLILPMLLPFLCALILVF, YLYLGTMTITTIISLMLLIYV, LSLIMVTTASFVITLIMAYGF, YHLPSFILFLSVGVIGSFLTS, LFNLYVMFEIMLLASFVLITL, IIYVVLNIIGSWLFLLGIGLL, ISLIFLVAFSAKAALVLFMWL, LAALFAALMTKVGAYALIRFF, IHPLLATMAAITMVIGAIGVI, IGFIILGLGTNTFAGINGAIF, LVNDIVVKTLLFFIIGSLVYI, FGVAFIIMIFAIGGVPPFSGF, GNYIGLALMIITSLIAMYSLF, and ILSILVVVVIAIGIAAPVVLN.

The protein belongs to the CPA3 antiporters (TC 2.A.63) subunit D family. May form a heterooligomeric complex that consists of seven subunits: mnhA2, mnhB2, mnhC2, mnhD2, mnhE2, mnhF2 and mnhG2.

Its subcellular location is the cell membrane. Expression of the mnh2 operon in E.coli is not able to catalyze Na(+)Li(+)/H(+) antiport. It does however confer higher growth rates than the control strain at up to pH 9.5. The operon may encode an NADH-ubiquinone oxidoreductase. This chain is Putative antiporter subunit mnhD2 (mnhD2), found in Staphylococcus aureus.